The sequence spans 509 residues: tRNA (guanine(37)-N(1))-methyltransferase (509 aa).

S-adenosyl-L-methionine contacts are provided by residues His-289, 327–328, 355–356, and Asn-387; these read DL and DG. The segment at 478–509 is disordered; that stretch reads TRNPENHEDPPLKRQRTAEAFSDEKTQIVSNT.

The protein belongs to the class I-like SAM-binding methyltransferase superfamily. TRM5/TYW2 family. In terms of assembly, monomer.

It localises to the mitochondrion matrix. It is found in the nucleus. Its subcellular location is the cytoplasm. It catalyses the reaction guanosine(37) in tRNA + S-adenosyl-L-methionine = N(1)-methylguanosine(37) in tRNA + S-adenosyl-L-homocysteine + H(+). Its function is as follows. Involved in mitochondrial tRNA methylation. Specifically methylates the N1 position of guanosine-37 in various tRNAs. Methylation is not dependent on the nature of the nucleoside 5' of the target nucleoside. This is the first step in the biosynthesis of wybutosine (yW), a modified base adjacent to the anticodon of tRNAs and required for accurate decoding. In Homo sapiens (Human), this protein is tRNA (guanine(37)-N(1))-methyltransferase.